A 779-amino-acid polypeptide reads, in one-letter code: Phosphoribosylformylglycinamidine synthase subunit PurL (779 aa).

H52 is a catalytic residue. Residues Y55 and K94 each contribute to the ATP site. Position 96 (E96) interacts with Mg(2+). Substrate contacts are provided by residues 97–100 (SHNH) and R119. H98 acts as the Proton acceptor in catalysis. Residue D120 coordinates Mg(2+). A substrate-binding site is contributed by Q243. Residue D271 participates in Mg(2+) binding. Substrate is bound at residue 315–317 (ESQ). Residues N523 and G560 each contribute to the ATP site. N561 serves as a coordination point for Mg(2+). S563 is a substrate binding site.

Belongs to the FGAMS family. In terms of assembly, monomer. Part of the FGAM synthase complex composed of 1 PurL, 1 PurQ and 2 PurS subunits.

The protein resides in the cytoplasm. The catalysed reaction is N(2)-formyl-N(1)-(5-phospho-beta-D-ribosyl)glycinamide + L-glutamine + ATP + H2O = 2-formamido-N(1)-(5-O-phospho-beta-D-ribosyl)acetamidine + L-glutamate + ADP + phosphate + H(+). It participates in purine metabolism; IMP biosynthesis via de novo pathway; 5-amino-1-(5-phospho-D-ribosyl)imidazole from N(2)-formyl-N(1)-(5-phospho-D-ribosyl)glycinamide: step 1/2. Its function is as follows. Part of the phosphoribosylformylglycinamidine synthase complex involved in the purines biosynthetic pathway. Catalyzes the ATP-dependent conversion of formylglycinamide ribonucleotide (FGAR) and glutamine to yield formylglycinamidine ribonucleotide (FGAM) and glutamate. The FGAM synthase complex is composed of three subunits. PurQ produces an ammonia molecule by converting glutamine to glutamate. PurL transfers the ammonia molecule to FGAR to form FGAM in an ATP-dependent manner. PurS interacts with PurQ and PurL and is thought to assist in the transfer of the ammonia molecule from PurQ to PurL. In Prochlorococcus marinus subsp. pastoris (strain CCMP1986 / NIES-2087 / MED4), this protein is Phosphoribosylformylglycinamidine synthase subunit PurL.